We begin with the raw amino-acid sequence, 469 residues long: Citrate synthase, mitochondrial (469 aa).

Residues 1–33 (MAPVMRLGSAALRSSIHLTSRQTAFTAARCYSS) constitute a mitochondrion transit peptide. Residue His-352 is part of the active site.

This sequence belongs to the citrate synthase family.

It localises to the mitochondrion matrix. It catalyses the reaction oxaloacetate + acetyl-CoA + H2O = citrate + CoA + H(+). It participates in carbohydrate metabolism; tricarboxylic acid cycle; isocitrate from oxaloacetate: step 1/2. The sequence is that of Citrate synthase, mitochondrial (cit-1) from Neurospora crassa (strain ATCC 24698 / 74-OR23-1A / CBS 708.71 / DSM 1257 / FGSC 987).